The following is a 544-amino-acid chain: Sphingosine-1-phosphate lyase (544 aa).

The Lumenal segment spans residues 1-29; that stretch reads MDSFSYSSMKSMLIQARGSLNSRLSEFEP. The helical; Signal-anchor for type III membrane protein transmembrane segment at 30 to 50 threads the bilayer; the sequence is LVLLLVPLVSLFLAQIIGSVF. Over 51 to 544 the chain is Cytoplasmic; sequence GVVHEKGLKA…LLVSFMDSQY (494 aa). Lysine 349 bears the N6-(pyridoxal phosphate)lysine mark.

This sequence belongs to the group II decarboxylase family. Sphingosine-1-phosphate lyase subfamily. Pyridoxal 5'-phosphate serves as cofactor. As to expression, expressed in the peripheral parts of leaves and the bases of trichomes.

The protein resides in the endoplasmic reticulum membrane. The catalysed reaction is sphinganine 1-phosphate = hexadecanal + phosphoethanolamine. Its pathway is lipid metabolism; sphingolipid metabolism. In terms of biological role, cleaves phosphorylated sphingoid bases (PSBs), such as sphingosine-1-phosphate, into fatty aldehydes and phosphoethanolamine. May play a minor role in maintenance of sphingolipid metabolism during normal plant development and growth, but be required for maintaining sphingoid long chain bases (LCB) and their phosphorylated derivatives (LCB-P) levels when sphingolipid metabolism is perturbed. May play a role in dehydration stress. The chain is Sphingosine-1-phosphate lyase (DPL1) from Arabidopsis thaliana (Mouse-ear cress).